Reading from the N-terminus, the 320-residue chain is ATP-dependent 6-phosphofructokinase (320 aa).

Residue Gly12 coordinates ATP. 22–26 (RGVVR) contacts ADP. ATP-binding positions include 73–74 (RF) and 103–106 (GDGS). A Mg(2+)-binding site is contributed by Asp104. 126–128 (TID) contributes to the substrate binding site. Catalysis depends on Asp128, which acts as the Proton acceptor. Arg155 is an ADP binding site. Substrate contacts are provided by residues Arg163 and 170–172 (MGR). ADP contacts are provided by residues 186–188 (GCE), Lys212, and 214–216 (KKH). Residues Glu223, Arg244, and 250 to 253 (HIQR) each bind substrate.

This sequence belongs to the phosphofructokinase type A (PFKA) family. ATP-dependent PFK group I subfamily. Prokaryotic clade 'B1' sub-subfamily. As to quaternary structure, homotetramer. The cofactor is Mg(2+).

The protein localises to the cytoplasm. The enzyme catalyses beta-D-fructose 6-phosphate + ATP = beta-D-fructose 1,6-bisphosphate + ADP + H(+). It participates in carbohydrate degradation; glycolysis; D-glyceraldehyde 3-phosphate and glycerone phosphate from D-glucose: step 3/4. Its activity is regulated as follows. Allosterically activated by ADP and other diphosphonucleosides, and allosterically inhibited by phosphoenolpyruvate. Catalyzes the phosphorylation of D-fructose 6-phosphate to fructose 1,6-bisphosphate by ATP, the first committing step of glycolysis. The sequence is that of ATP-dependent 6-phosphofructokinase from Vibrio campbellii (strain ATCC BAA-1116).